The sequence spans 811 residues: MTGIHPVDITSEVKTNFINYAMNVIVDRALPDVRDGLKPVQRRIMYAMLLEGLYSNQKHAKSASVVGEVMKKYHPHGDSSIYDAMVRLAQWWNMRYPMVHPQGNFGSIDGDPPAAMRYTEARMTKVAEELIADLEKETVDLKPNYDETTEEPSVLPAAVPNLLINGATGIAVGMATNIPPHNLTEICNGLLAMIDDPNLTLDGLMEHVTGPDFPTGGRITKTGIREAYATGHSGLKVRGKARIEEKNGRNQIIISEIPYQVNKTNLIQTISAMYKAGKIPDISALRDESDRKDPVRIVVELKRGAIPTLVLNQLYKYTQLQTTYTVINLSIVGGEPRVLPLLNTMQYFLDHRADVVTRRTRYDLRKAEERAHVLEGLLKALDHIDEVISLIRGSNTGAEARDALMVRFGLTEIQSQAILDMRLQRLVGLEREKLQAEFDELQKTIEYLRSILGDEKLLWREIKKEIRAIRDNYGDERRSTITELEEDIGKEDLIAVEDMVITMTKAGYLKRTKLDAYRAQGRGGRGSSGGKLREEDVNTRVFVGSTHDYLLFFTDQGRVFHEKIYDLPEAGRDAKGTHIRNLLPSLREDENIASVLSVGGFDEPGCFIFATRKGVVKKTLITEYGNITSAGLIAINLQPGDELIGVGIVNDIDHVVLATRNGKAMRFESDEVRATGRATQGVIGIRLREGEDDAVVSMALVPGGDEASELLAVSECGLGKRTPVGDYPAKGRGGMGVITLDVTEKTGKLVTLARVAGNEELMVLTEKGTVIRTRVEEVRVTGRNAQGVKVINIAERDSVISAFPIRREDEL.

The Topo IIA-type catalytic domain maps to 30–493; it reads LPDVRDGLKP…LEEDIGKEDL (464 aa). The active-site O-(5'-phospho-DNA)-tyrosine intermediate is Tyr118. A GyrA-box motif is present at residues 520–526; it reads QGRGGRG.

Belongs to the type II topoisomerase GyrA/ParC subunit family. Heterotetramer, composed of two GyrA and two GyrB chains. In the heterotetramer, GyrA contains the active site tyrosine that forms a transient covalent intermediate with DNA, while GyrB binds cofactors and catalyzes ATP hydrolysis.

It is found in the cytoplasm. It carries out the reaction ATP-dependent breakage, passage and rejoining of double-stranded DNA.. A type II topoisomerase that negatively supercoils closed circular double-stranded (ds) DNA in an ATP-dependent manner to modulate DNA topology and maintain chromosomes in an underwound state. Negative supercoiling favors strand separation, and DNA replication, transcription, recombination and repair, all of which involve strand separation. Also able to catalyze the interconversion of other topological isomers of dsDNA rings, including catenanes and knotted rings. Type II topoisomerases break and join 2 DNA strands simultaneously in an ATP-dependent manner. The protein is DNA gyrase subunit A of Deinococcus deserti (strain DSM 17065 / CIP 109153 / LMG 22923 / VCD115).